The chain runs to 432 residues: Phosphomevalonate kinase (432 aa).

Residues Lys10 and 142–148 each bind ATP; that span reads VEKTGLG.

This sequence belongs to the GHMP kinase family. Mevalonate kinase subfamily.

It localises to the cytoplasm. It catalyses the reaction (R)-5-phosphomevalonate + ATP = (R)-5-diphosphomevalonate + ADP. It participates in isoprenoid biosynthesis; isopentenyl diphosphate biosynthesis via mevalonate pathway; isopentenyl diphosphate from (R)-mevalonate: step 2/3. In terms of biological role, phosphomevalonate kinase; part of the second module of ergosterol biosynthesis pathway that includes the middle steps of the pathway. ERG8 converts 5-phosphomevalonate to 5-diphosphomevalonate. The second module is carried out in the vacuole and involves the formation of farnesyl diphosphate, which is also an important intermediate in the biosynthesis of ubiquinone, dolichol, heme and prenylated proteins. Activity by the mevalonate kinase ERG12 first converts mevalonate into 5-phosphomevalonate. 5-phosphomevalonate is then further converted to 5-diphosphomevalonate by the phosphomevalonate kinase ERG8. The diphosphomevalonate decarboxylase MVD then produces isopentenyl diphosphate. The isopentenyl-diphosphate delta-isomerase IDI1 then catalyzes the 1,3-allylic rearrangement of the homoallylic substrate isopentenyl (IPP) to its highly electrophilic allylic isomer, dimethylallyl diphosphate (DMAPP). Finally the farnesyl diphosphate synthase ERG20 catalyzes the sequential condensation of isopentenyl pyrophosphate with dimethylallyl pyrophosphate, and then with the resultant geranylpyrophosphate to the ultimate product farnesyl pyrophosphate. In Candida albicans (strain SC5314 / ATCC MYA-2876) (Yeast), this protein is Phosphomevalonate kinase.